The sequence spans 159 residues: Ribosomal RNA large subunit methyltransferase H (159 aa).

Residues leucine 76, glycine 108, and 127 to 132 (LSKMTF) each bind S-adenosyl-L-methionine.

It belongs to the RNA methyltransferase RlmH family. As to quaternary structure, homodimer.

The protein resides in the cytoplasm. The enzyme catalyses pseudouridine(1915) in 23S rRNA + S-adenosyl-L-methionine = N(3)-methylpseudouridine(1915) in 23S rRNA + S-adenosyl-L-homocysteine + H(+). Functionally, specifically methylates the pseudouridine at position 1915 (m3Psi1915) in 23S rRNA. The chain is Ribosomal RNA large subunit methyltransferase H from Ureaplasma urealyticum serovar 10 (strain ATCC 33699 / Western).